A 55-amino-acid chain; its full sequence is Accessory gland-specific peptide 70A (55 aa).

An N-terminal signal peptide occupies residues 1–19 (MKTLSLFLVLVCLLGLVQS). Hydroxyproline occurs at positions 28, 32, 34, and 38. Cysteine 43 and cysteine 55 are joined by a disulfide.

In terms of tissue distribution, main cells of the accessory glands of males (paragonial gland).

It is found in the secreted. Represses female sexual receptivity and stimulates oviposition. This chain is Accessory gland-specific peptide 70A (Acp70A), found in Drosophila mauritiana (Fruit fly).